An 892-amino-acid polypeptide reads, in one-letter code: UPF0182 protein Gura_0902 (892 aa).

7 consecutive transmembrane segments (helical) span residues 6–26, 50–70, 103–123, 158–178, 201–221, 248–268, and 271–291; these read FIII…LINF, VGAG…NLHF, LGIL…AMQW, MLKI…GAVY, LAVL…LNGC, ILTV…WQGA, and LALL…KAYP.

Belongs to the UPF0182 family.

The protein localises to the cell membrane. The protein is UPF0182 protein Gura_0902 of Geotalea uraniireducens (strain Rf4) (Geobacter uraniireducens).